The following is a 538-amino-acid chain: Zinc finger protein 155 (538 aa).

The 71-residue stretch at 8-78 (VTFKDVAVVF…GTATQREGNS (71 aa)) folds into the KRAB domain. C2H2-type zinc fingers lie at residues 176 to 198 (YTCDECGKSICYISALHVHQRVH), 204 to 226 (FMCDVCGKEFSQSSHLQTHQRVH), 232 to 254 (FKCEQCGKGFSRRSALNVHRKLH), 260 to 282 (YICEACGKAFIHDSQLKEHKRIH), 288 to 310 (FKCDICGKTFYFRSRLKSHSMVH), 316 to 338 (FRCDTCDKSFHQRSALNRHCMVH), 344 to 366 (YRCEQCGKGFIGRLDFYKHQVVH), 372 to 394 (YNCKECGKSFRWSSCLLNHQRVH), 400 to 422 (FKCEECGKGFYTNSQLSSHQRSH), 428 to 450 (YKCEECGKGYVTKFNLDLHQRVH), and 456 to 478 (YNCKECGKNFSRASSILNHKRLH). The segment at 484-506 (FKCEDCGKRLVHRTYRKDQPRDY) adopts a C2H2-type 12; degenerate zinc-finger fold.

This sequence belongs to the krueppel C2H2-type zinc-finger protein family.

The protein localises to the nucleus. May be involved in transcriptional regulation. The chain is Zinc finger protein 155 (ZNF155) from Homo sapiens (Human).